A 119-amino-acid chain; its full sequence is Large ribosomal subunit protein bL20 (119 aa).

The protein belongs to the bacterial ribosomal protein bL20 family.

Functionally, binds directly to 23S ribosomal RNA and is necessary for the in vitro assembly process of the 50S ribosomal subunit. It is not involved in the protein synthesizing functions of that subunit. The polypeptide is Large ribosomal subunit protein bL20 (Bradyrhizobium sp. (strain ORS 278)).